A 407-amino-acid polypeptide reads, in one-letter code: uncharacterized protein (407 aa).

11 helical membrane-spanning segments follow: residues 13–30, 40–62, 67–89, 118–140, 147–169, 179–199, 253–271, 281–303, 334–356, 361–378, and 385–402; these read IVFT…SPFL, VTPL…YYVL, ILGM…YNII, LAFA…VFSG, VYER…IRRL, AVGL…YYNY, WISG…SVFV, TEII…FGPL, GYLI…EIIA, AFAF…LVSF, and QFLV…IVLF.

The protein resides in the cell membrane. This is an uncharacterized protein from Aquifex aeolicus (strain VF5).